A 266-amino-acid polypeptide reads, in one-letter code: GRIP and coiled-coil domain-containing protein C365.11 (266 aa).

Over residues 1–13 the composition is skewed to polar residues; it reads METTVSAKNSLEN. The interval 1–88 is disordered; that stretch reads METTVSAKNS…LDEKVKELEN (88 aa). Residue Ser10 is modified to Phosphoserine. Basic residues predominate over residues 36–49; that stretch reads ASKKKRKNRKKKKN. Over residues 63–88 the composition is skewed to basic and acidic residues; it reads EEQRSGSIDSKDKEKPLDEKVKELEN. A coiled-coil region spans residues 73–188; the sequence is KDKEKPLDEK…ESVKSHESEL (116 aa). Ser202 and Ser204 each carry phosphoserine. A GRIP domain is found at 216 to 264; that stretch reads ISKELINKEYARNVLLQFLENHEHRDKILPILSTALDLEEVHQHLILKN.

Its subcellular location is the cytoplasm. This is GRIP and coiled-coil domain-containing protein C365.11 from Schizosaccharomyces pombe (strain 972 / ATCC 24843) (Fission yeast).